Consider the following 146-residue polypeptide: Hemoglobin subunit beta-C (146 aa).

Positions 2–146 (EWTDFERATI…VVSSLGRQYH (145 aa)) constitute a Globin domain. Heme b-binding residues include histidine 63 and histidine 92.

Belongs to the globin family. As to quaternary structure, hbC is a heterotetramer of two alpha chains and two beta-C chains. Red blood cells.

Involved in oxygen transport from gills to the various peripheral tissues. The protein is Hemoglobin subunit beta-C (hbbc) of Trematomus bernacchii (Emerald rockcod).